The sequence spans 522 residues: Putative aldehyde dehydrogenase-like protein C21C3 (522 aa).

The Proton acceptor role is filled by E239. The active-site Nucleophile is the C273.

Belongs to the aldehyde dehydrogenase family.

It is found in the cytoplasm. The protein localises to the nucleus. In Schizosaccharomyces pombe (strain 972 / ATCC 24843) (Fission yeast), this protein is Putative aldehyde dehydrogenase-like protein C21C3.